Consider the following 149-residue polypeptide: L-alanine exporter AlaE (149 aa).

Transmembrane regions (helical) follow at residues phenylalanine 16 to methionine 36, leucine 46 to isoleucine 66, valine 85 to alanine 105, and alanine 112 to leucine 132.

Belongs to the AlaE exporter family.

It is found in the cell inner membrane. Its function is as follows. Exports L-alanine. The sequence is that of L-alanine exporter AlaE from Salmonella arizonae (strain ATCC BAA-731 / CDC346-86 / RSK2980).